We begin with the raw amino-acid sequence, 530 residues long: MSATLGRAFVQNFLGQAPAWYKYTIVAFLLINPLVALTLGPVTAGWLLLAEFIFTLAMALKCYPLQPGGLLAIEAVMIGLTSAETVLHKVVGNIEVMLLLIFMVAGIYFLKDLLLFMFTRILLGVKSKVTLSLLFCAAAALLSAFLDALTVTAVVIAVCTGFYGIYHKVASGKTFQQKHDHGDDTTVEELHREDLRRFRSFLRSLLMHAAVGTALGGVCTLVGEPQNLLIANKAGWEFGEFFLRMAPITLPVLVMGFFTCAFLEFSGSFGYGEDIPEKVRGIMRQYALEQDRKRTPQNRAALVIQAITAVWLVIGLATHAASVGLVGLTVIILATSFTGIIEEHRLGAAFEEALPFTALLTVFFAVVAVIADQQLFAPVIEYVLSLEKQVQGPAFYMANGILSAVSDNVFVATVYVDEVGQALLKNEIDRDTFDLLAVAINTGTNIPSVATPNGQAAFLFLLTSALAPLVRLSYGRMVIMALPYTIVMSITGLVMTATVLEPATDYLYENGWIQHHQVEDLQETPLIPGH.

Helical transmembrane passes span 13 to 33 (FLGQ…LINP), 67 to 87 (PGGL…ETVL), 90 to 110 (VVGN…IYFL), 138 to 158 (AAAL…VIAV), 205 to 225 (LLMH…VGEP), 245 to 265 (MAPI…FLEF), 302 to 333 (LVIQ…VIIL), 350 to 370 (FEEA…VAVI), 449 to 469 (VATP…LAPL), and 477 to 497 (MVIM…VMTA).

This sequence belongs to the NhaB Na(+)/H(+) (TC 2.A.34) antiporter family.

The protein localises to the cell inner membrane. It catalyses the reaction 2 Na(+)(in) + 3 H(+)(out) = 2 Na(+)(out) + 3 H(+)(in). Functionally, na(+)/H(+) antiporter that extrudes sodium in exchange for external protons. This chain is Na(+)/H(+) antiporter NhaB, found in Alcanivorax borkumensis (strain ATCC 700651 / DSM 11573 / NCIMB 13689 / SK2).